A 1650-amino-acid polypeptide reads, in one-letter code: Transmembrane domain-containing protein DDB_G0287209 (1650 aa).

Residues 194–225 (NNNNNNFNNNNNNNNNNNNNKNNYNNNKSNLI) adopt a coiled-coil conformation. Disordered stretches follow at residues 197–216 (NNNF…NKNN) and 1218–1296 (ENQF…NINN). Residues 1224-1284 (NNNENSGSSG…SNSNENNYNG (61 aa)) are compositionally biased toward low complexity. 9 helical membrane-spanning segments follow: residues 1314-1334 (PLLL…LSLF), 1347-1369 (ILFL…LQLF), 1390-1410 (ISIS…DVTS), 1454-1474 (WNIY…LIVP), 1489-1509 (ILFI…VILF), 1515-1535 (WWDL…VTLL), 1539-1559 (PVYF…QFAF), 1570-1590 (VENL…TSII), and 1595-1615 (FNLI…ITII).

The protein localises to the membrane. The protein is Transmembrane domain-containing protein DDB_G0287209 of Dictyostelium discoideum (Social amoeba).